Consider the following 157-residue polypeptide: N5-carboxyaminoimidazole ribonucleotide mutase (157 aa).

S8, D11, and R38 together coordinate substrate.

Belongs to the AIR carboxylase family. Class I subfamily.

It carries out the reaction 5-carboxyamino-1-(5-phospho-D-ribosyl)imidazole + H(+) = 5-amino-1-(5-phospho-D-ribosyl)imidazole-4-carboxylate. The protein operates within purine metabolism; IMP biosynthesis via de novo pathway; 5-amino-1-(5-phospho-D-ribosyl)imidazole-4-carboxylate from 5-amino-1-(5-phospho-D-ribosyl)imidazole (N5-CAIR route): step 2/2. In terms of biological role, catalyzes the conversion of N5-carboxyaminoimidazole ribonucleotide (N5-CAIR) to 4-carboxy-5-aminoimidazole ribonucleotide (CAIR). The sequence is that of N5-carboxyaminoimidazole ribonucleotide mutase from Methanocaldococcus jannaschii (strain ATCC 43067 / DSM 2661 / JAL-1 / JCM 10045 / NBRC 100440) (Methanococcus jannaschii).